We begin with the raw amino-acid sequence, 241 residues long: Pyridoxine 5'-phosphate synthase (241 aa).

Residue asparagine 7 participates in 3-amino-2-oxopropyl phosphate binding. 9-10 is a 1-deoxy-D-xylulose 5-phosphate binding site; that stretch reads DH. Arginine 18 is a 3-amino-2-oxopropyl phosphate binding site. Histidine 43 acts as the Proton acceptor in catalysis. Positions 45 and 50 each coordinate 1-deoxy-D-xylulose 5-phosphate. Catalysis depends on glutamate 70, which acts as the Proton acceptor. Threonine 100 is a 1-deoxy-D-xylulose 5-phosphate binding site. Histidine 191 serves as the catalytic Proton donor. 3-amino-2-oxopropyl phosphate contacts are provided by residues glycine 192 and 213–214; that span reads GH.

Belongs to the PNP synthase family. Homooctamer; tetramer of dimers.

Its subcellular location is the cytoplasm. The enzyme catalyses 3-amino-2-oxopropyl phosphate + 1-deoxy-D-xylulose 5-phosphate = pyridoxine 5'-phosphate + phosphate + 2 H2O + H(+). Its pathway is cofactor biosynthesis; pyridoxine 5'-phosphate biosynthesis; pyridoxine 5'-phosphate from D-erythrose 4-phosphate: step 5/5. In terms of biological role, catalyzes the complicated ring closure reaction between the two acyclic compounds 1-deoxy-D-xylulose-5-phosphate (DXP) and 3-amino-2-oxopropyl phosphate (1-amino-acetone-3-phosphate or AAP) to form pyridoxine 5'-phosphate (PNP) and inorganic phosphate. The polypeptide is Pyridoxine 5'-phosphate synthase (Nitratidesulfovibrio vulgaris (strain ATCC 29579 / DSM 644 / CCUG 34227 / NCIMB 8303 / VKM B-1760 / Hildenborough) (Desulfovibrio vulgaris)).